The primary structure comprises 1302 residues: Serine-enriched protein (1302 aa).

The region spanning 40-158 (CDVTFLVGDT…IHTGCVTLQP (119 aa)) is the BTB domain. Disordered regions lie at residues 325 to 532 (SIDP…RSPT), 575 to 624 (PIPP…SVMR), 648 to 685 (FTRA…QKQM), 701 to 752 (YAKM…SSDE), 834 to 858 (FTRR…DSND), 1045 to 1090 (FQRS…RTEN), 1102 to 1163 (FSRA…GEEE), and 1187 to 1252 (VLTQ…SASP). Over residues 337–364 (RQHHRHRHHHQSLPKIRKAKSQSFRTRR) the composition is skewed to basic residues. Polar residues-rich tracts occupy residues 378-388 (LTLNTSLTSGN), 410-430 (SPGS…TLRA), 437-449 (SGQL…TQGR), and 472-487 (GLRS…TVRS). The span at 589-623 (KSAEREREAAEAAAREKEKEKEKEAAQPQEKKSVM) shows a compositional bias: basic and acidic residues. Residues 664–680 (STFSASPAASSTAAKSA) show a composition bias toward low complexity. Over residues 713 to 723 (KRDDEEKEKQK) the composition is skewed to basic and acidic residues. Residues 736 to 748 (DLSQTNADQQVGG) are compositionally biased toward polar residues. Basic and acidic residues predominate over residues 836–855 (RRSESREPIEPRISEERESD). Composition is skewed to low complexity over residues 1047 to 1056 (RSGSSCGGRK) and 1107 to 1128 (SPLS…SSGS). The span at 1187 to 1207 (VLTQQLSTGSMSTPSGYTNGT) shows a compositional bias: polar residues. Residues 1226–1252 (APLSSCGFSSGSEFEPPSPRRAASASP) are compositionally biased toward low complexity.

In Drosophila melanogaster (Fruit fly), this protein is Serine-enriched protein (gprs).